Reading from the N-terminus, the 700-residue chain is AP-2 complex subunit beta (700 aa).

Positions 625–700 are disordered; it reads VGNSFPPTGA…RKLSMKRPFS (76 aa). Serine 649 bears the Phosphoserine mark. A Phosphothreonine modification is found at threonine 652. The span at 653–663 shows a compositional bias: basic and acidic residues; it reads AMMDDYDKPAE. Serine 683 is modified (phosphoserine).

The protein belongs to the adaptor complexes large subunit family. Adaptor protein complex 2 (AP-2) is a heterotetramer composed of two large adaptins (alpha-type subunit APL3 and beta-type subunit APL1), a medium chain (mu-type subunit APM4) and a small adaptin (sigma-type subunit APS2). Interacts with APS2.

It is found in the cell membrane. It localises to the membrane. Its subcellular location is the coated pit. Functionally, adaptins are components of the adaptor complexes which link clathrin to receptors in coated vesicles. Clathrin-associated protein complexes are believed to interact with the cytoplasmic tails of membrane proteins, leading to their selection and concentration. Beta adaptin is a subunit of the plasma membrane adaptor. In Saccharomyces cerevisiae (strain ATCC 204508 / S288c) (Baker's yeast), this protein is AP-2 complex subunit beta (APL1).